A 362-amino-acid polypeptide reads, in one-letter code: Serine/threonine-protein phosphatase 2A activator 1 (362 aa).

Positions 1–10 are enriched in pro residues; that stretch reads MQPHTQPPQP. 2 disordered regions span residues 1 to 28 and 339 to 362; these read MQPH…APPR and NVEE…PWAR. Over residues 340 to 351 the composition is skewed to basic and acidic residues; that stretch reads VEERGDKNEGKG.

It belongs to the PTPA-type PPIase family.

Its subcellular location is the cytoplasm. The protein resides in the nucleus. It carries out the reaction [protein]-peptidylproline (omega=180) = [protein]-peptidylproline (omega=0). Its function is as follows. PPIases accelerate the folding of proteins. It catalyzes the cis-trans isomerization of proline imidic peptide bonds in oligopeptides. Acts as a regulatory subunit for PP2A-like phosphatases modulating their activity or substrate specificity, probably by inducing a conformational change in the catalytic subunit, a direct target of the PPIase. Can reactivate inactive phosphatase PP2A-phosphatase methylesterase complexes (PP2Ai) in presence of ATP and Mg(2+) by dissociating the inactive form from the complex. The sequence is that of Serine/threonine-protein phosphatase 2A activator 1 (RRD1) from Cryptococcus neoformans var. neoformans serotype D (strain B-3501A) (Filobasidiella neoformans).